The following is a 266-amino-acid chain: 5'-nucleotidase SurE (266 aa).

Aspartate 8, aspartate 9, serine 40, and asparagine 98 together coordinate a divalent metal cation.

It belongs to the SurE nucleotidase family. Requires a divalent metal cation as cofactor.

Its subcellular location is the cytoplasm. It carries out the reaction a ribonucleoside 5'-phosphate + H2O = a ribonucleoside + phosphate. In terms of biological role, nucleotidase that shows phosphatase activity on nucleoside 5'-monophosphates. In Parasynechococcus marenigrum (strain WH8102), this protein is 5'-nucleotidase SurE.